The chain runs to 145 residues: Transcriptional regulator MraZ (145 aa).

SpoVT-AbrB domains follow at residues 5–49 and 78–121; these read TYNH…LESE and TYKV…AKEV.

Belongs to the MraZ family. In terms of assembly, forms oligomers.

The protein localises to the cytoplasm. It localises to the nucleoid. The chain is Transcriptional regulator MraZ from Ureaplasma urealyticum serovar 10 (strain ATCC 33699 / Western).